A 552-amino-acid polypeptide reads, in one-letter code: Elongator complex protein 3 (552 aa).

Residues 84–374 (RTASGIAVVA…YRVQRDIPMP (291 aa)) form the Radical SAM core domain. The [4Fe-4S] cluster site is built by Cys-101, Cys-111, and Cys-114. Acetyl-CoA is bound by residues Lys-166, 476 to 479 (ELHV), 499 to 501 (FGM), and Tyr-532. The region spanning 398 to 552 (TTCRDVRTRE…YMSKSIEENN (155 aa)) is the N-acetyltransferase domain.

It belongs to the ELP3 family. Component of the elongator complex composed of Elp1, Elp2, Elp3, Elp4, Elp5 and Elp6. The elongator complex associates with and stabilizes microtubules; efficient interaction requires the full complex. Requires [4Fe-4S] cluster as cofactor.

Its subcellular location is the cytoplasm. The protein localises to the nucleus. It is found in the cytoskeleton. The protein resides in the spindle. It carries out the reaction uridine(34) in tRNA + acetyl-CoA + S-adenosyl-L-methionine + H2O = 5-(carboxymethyl)uridine(34) in tRNA + 5'-deoxyadenosine + L-methionine + CoA + 2 H(+). It participates in tRNA modification; 5-methoxycarbonylmethyl-2-thiouridine-tRNA biosynthesis. In terms of biological role, catalytic tRNA acetyltransferase subunit of the elongator complex, which is required for multiple tRNA modifications, including mcm5U (5-methoxycarbonylmethyl uridine), mcm5s2U (5-methoxycarbonylmethyl-2-thiouridine), and ncm5U (5-carbamoylmethyl uridine). In the elongator complex, acts as a tRNA uridine(34) acetyltransferase by mediating formation of carboxymethyluridine in the wobble base at position 34 in tRNAs. Binding by the elongator complex stabilizes microtubules and promotes their growth. This induces central spindle asymmetry, promoting polarized signaling endosome trafficking during asymmetric cell division and cell fate assignation of sensory organ precursor cells. Plays a role in the control of synaptic bouton expansion. Required for larval development. Involved in protein synthesis-dependent long-term memory formation, probably as part of the elongator complex. The chain is Elongator complex protein 3 from Drosophila melanogaster (Fruit fly).